We begin with the raw amino-acid sequence, 149 residues long: Large ribosomal subunit protein bL9 (149 aa).

Belongs to the bacterial ribosomal protein bL9 family.

Binds to the 23S rRNA. The sequence is that of Large ribosomal subunit protein bL9 from Teredinibacter turnerae (strain ATCC 39867 / T7901).